The primary structure comprises 464 residues: Non-neuronal cytoplasmic intermediate filament protein (464 aa).

Polar residues predominate over residues 1–14 (MSTQTKKVTRTIIT). The interval 1–59 (MSTQTKKVTRTIITSSSGGGGGGGGGRASYSSSGRFSGGGGRMRAGGVTSRRSVGSSYS) is disordered. A head region spans residues 1 to 101 (MSTQTKKVTR…RMTRAHEKQE (101 aa)). Gly residues predominate over residues 17-27 (SGGGGGGGGGR). A compositionally biased stretch (low complexity) spans 45–59 (AGGVTSRRSVGSSYS). One can recognise an IF rod domain in the interval 98–413 (EKQELSHLND…KLLEGEEIRL (316 aa)). Residues 102 to 133 (LSHLNDRFASYIDKVRYLQERNSKLEAQIKIQ) form a coil 1A region. Positions 134 to 144 (ESREAPNIKDL) are linker 1. Residues 145–237 (YEKELRDLRA…FLKRVHDEEI (93 aa)) form a coil 1B region. Residues 238-264 (RQLQDQLNESLTIVEVDSRAASTFAPG) are linker 2. The interval 265–413 (PDLTEALREI…KLLEGEEIRL (149 aa)) is coil 2. The tail stretch occupies residues 414-464 (FGESKEGVQQTSSSSSSSYQYSMKSGSGGGGGGSSSGKQQVTVSVSSGEEK). The interval 415–464 (GESKEGVQQTSSSSSSSYQYSMKSGSGGGGGGSSSGKQQVTVSVSSGEEK) is disordered. Positions 420–438 (GVQQTSSSSSSSYQYSMKS) are enriched in low complexity. Residues 439 to 448 (GSGGGGGGSS) show a composition bias toward gly residues. Over residues 449–464 (SGKQQVTVSVSSGEEK) the composition is skewed to low complexity.

It belongs to the intermediate filament family. In terms of assembly, can form homopolymers.

Its subcellular location is the cytoplasm. In Branchiostoma lanceolatum (Common lancelet), this protein is Non-neuronal cytoplasmic intermediate filament protein.